The chain runs to 240 residues: 4-hydroxy-tetrahydrodipicolinate reductase (240 aa).

NAD(+) is bound by residues 79 to 81 (ATT) and 103 to 106 (SANM). His135 (proton donor/acceptor) is an active-site residue. His136 lines the (S)-2,3,4,5-tetrahydrodipicolinate pocket. The Proton donor role is filled by Lys139. (S)-2,3,4,5-tetrahydrodipicolinate is bound at residue 145–146 (GT).

This sequence belongs to the DapB family.

It is found in the cytoplasm. It catalyses the reaction (S)-2,3,4,5-tetrahydrodipicolinate + NAD(+) + H2O = (2S,4S)-4-hydroxy-2,3,4,5-tetrahydrodipicolinate + NADH + H(+). It carries out the reaction (S)-2,3,4,5-tetrahydrodipicolinate + NADP(+) + H2O = (2S,4S)-4-hydroxy-2,3,4,5-tetrahydrodipicolinate + NADPH + H(+). It functions in the pathway amino-acid biosynthesis; L-lysine biosynthesis via DAP pathway; (S)-tetrahydrodipicolinate from L-aspartate: step 4/4. Catalyzes the conversion of 4-hydroxy-tetrahydrodipicolinate (HTPA) to tetrahydrodipicolinate. In Staphylococcus aureus (strain bovine RF122 / ET3-1), this protein is 4-hydroxy-tetrahydrodipicolinate reductase.